The following is a 115-amino-acid chain: Large ribosomal subunit protein bL19 (115 aa).

The protein belongs to the bacterial ribosomal protein bL19 family.

In terms of biological role, this protein is located at the 30S-50S ribosomal subunit interface and may play a role in the structure and function of the aminoacyl-tRNA binding site. The sequence is that of Large ribosomal subunit protein bL19 from Alkaliphilus oremlandii (strain OhILAs) (Clostridium oremlandii (strain OhILAs)).